The primary structure comprises 217 residues: Cytokinin riboside 5'-monophosphate phosphoribohydrolase LOG7 (217 aa).

Substrate contacts are provided by residues glutamate 79, 97 to 98 (RK), 114 to 120 (GYGTLEE), and threonine 126.

It belongs to the LOG family. Expressed in roots and shoots. Detected in the epidermis of the root elongation zone, cotyledon and leaves, in trichomes and pollen.

The protein resides in the cytoplasm. The protein localises to the nucleus. It catalyses the reaction N(6)-(dimethylallyl)adenosine 5'-phosphate + H2O = N(6)-dimethylallyladenine + D-ribose 5-phosphate. The catalysed reaction is 9-ribosyl-trans-zeatin 5'-phosphate + H2O = trans-zeatin + D-ribose 5-phosphate. Cytokinin-activating enzyme working in the direct activation pathway. Phosphoribohydrolase that converts inactive cytokinin nucleotides to the biologically active free-base forms. This Arabidopsis thaliana (Mouse-ear cress) protein is Cytokinin riboside 5'-monophosphate phosphoribohydrolase LOG7 (LOG7).